Consider the following 228-residue polypeptide: Rab-like protein 2A (228 aa).

Residues G28 to S35, D76 to Q80, and N133 to D136 contribute to the GTP site. Positions L200–S228 are disordered.

The protein belongs to the small GTPase superfamily. Rab family. As to quaternary structure, interacts with IFT27, IFT81, IFT172, ATP6V1E1, HK1, LDHC, MAPRE1 and HSPA2. As to expression, expressed in the testis.

Plays an essential role in male fertility, sperm intra-flagellar transport, and tail assembly. Binds, in a GTP-regulated manner, to a specific set of effector proteins including key proteins involved in cilia development and function and delivers them into the growing sperm tail. This is Rab-like protein 2A (RABL2A) from Homo sapiens (Human).